Here is a 760-residue protein sequence, read N- to C-terminus: MTSPENPDLPDADDAYVDSGPGTQPASLEDLDMDSASTMRPMATQAVYRPEFDDTDGTSRGTVVTEAYDQVTMATRALSPMRRLGGGLVEIPRVPERDPLTALMTNPVVAESKRFCWNCGKPVGRSTPDGRALSEGWCPHCGSPYSFLPQLSPGDIVADQYEIKGCIAHGGLGWVYLAFDKNVNDRPVVLKGLVHSGDAEAQAIAMAERQFLAEVTHPGIVKIYNFVEHEDKHGNPVGYIVMEYVGGTSLKQARGAKLPVAEAIGYMLEILPALGYLHSIGLAYNDLKPENIMITEEQLKLIDLGAVSRLNSYGYLYGTPGYQAPEIVRTGPTVATDIYTVGRTLAALTLSLRTRRGRYVDGLPSDDPVLETYDSYHRLLRRAIDPDPRRRFTSAEEMSSQLLGVLREVVATDTGVPRPGLSTVFSPSRSTFGVDLLVAHTDVYVDGQVHSEKLTAQEIVRALPVPLVDRTDVGAPMLVASVLSEPVHTLDQLRAARHGALDTEGIDLNESVELPLMEVRALLDLGDVAKATRKLEDLAARVGWRWRLVWFKAVSEMLSADYDSATKHFTEVLDTLPGELAPKLALAATAELAGTADELKFYKTVWSTDNGVISAGFGLARAQSVAGERDMAVQTLDEVPPTSRHFTTARLTSAVTLLSGRSTSEITEQHIRDAARRVEALPDSEPRVLQIRALVLGTALDWLADNTASSNHILGFPFTEHGLKLGVEASLRALARIAPTQSHRYALVDLANSVRPMSTF.

Positions 1-31 (MTSPENPDLPDADDAYVDSGPGTQPASLEDL) are disordered. The Protein kinase domain occupies 161–403 (YEIKGCIAHG…SAEEMSSQLL (243 aa)). ATP is bound by residues 167-175 (IAHGGLGWV) and lysine 191. Aspartate 286 (proton acceptor) is an active-site residue.

It belongs to the protein kinase superfamily. Ser/Thr protein kinase family. In terms of assembly, interacts with GarA in vitro.

The enzyme catalyses L-seryl-[protein] + ATP = O-phospho-L-seryl-[protein] + ADP + H(+). It carries out the reaction L-threonyl-[protein] + ATP = O-phospho-L-threonyl-[protein] + ADP + H(+). The chain is Serine/threonine-protein kinase PknG (pknG) from Mycolicibacterium smegmatis (strain ATCC 700084 / mc(2)155) (Mycobacterium smegmatis).